Consider the following 178-residue polypeptide: Glutamyl-tRNA(Gln) amidotransferase subunit C, mitochondrial (178 aa).

A mitochondrion-targeting transit peptide spans 1 to 31; sequence MFRHIFTLGPRSISAITVRSRRALSSTAKPV. Residues 26–67 form a disordered region; that stretch reads STAKPVSAPVTSDDRPNLDVKHLKHPTKVPQQPHKSDIDRRQ. The span at 37-46 shows a compositional bias: basic and acidic residues; the sequence is SDDRPNLDVK.

Belongs to the GatC family. Subunit of the heterotrimeric GatCAB amidotransferase (AdT) complex, composed of A, B and C subunits.

It is found in the mitochondrion. The catalysed reaction is L-glutamyl-tRNA(Gln) + L-glutamine + ATP + H2O = L-glutaminyl-tRNA(Gln) + L-glutamate + ADP + phosphate + H(+). Functionally, allows the formation of correctly charged Gln-tRNA(Gln) through the transamidation of misacylated Glu-tRNA(Gln) in the mitochondria. The reaction takes place in the presence of glutamine and ATP through an activated gamma-phospho-Glu-tRNA(Gln). The protein is Glutamyl-tRNA(Gln) amidotransferase subunit C, mitochondrial of Aedes aegypti (Yellowfever mosquito).